We begin with the raw amino-acid sequence, 710 residues long: Protein CNGC15a (710 aa).

Transmembrane regions (helical) follow at residues 85 to 105 (IFLAACLISLFVDPLFFYLPV), 115 to 135 (SIGLEVSLTIIRTFVDAFYII), 174 to 194 (LWSDLVAALPLPQVLIWAVIP), 207 to 226 (VVRLVSIFQYLLRLYLIYPL), 248 to 268 (YLTLYMLASHVLGSTWYLLSI), and 368 to 388 (AEINFAVIVAILGLVLFALLI). Position 474 to 559 (474 to 559 (LFDQMDDRML…WALDPRPTAV (86 aa))) interacts with a nucleoside 3',5'-cyclic phosphate.

The protein belongs to the cyclic nucleotide-gated cation channel (TC 1.A.1.5) family. Interacts (via N-terminus) with DMI1 (via c-terminus). The Nod factor has no effect on this interaction, implying that the complex is maintained after activation. As to expression, expressed in roots, stems, leaves, flowers and pods.

Its subcellular location is the nucleus membrane. Its function is as follows. Cyclic nucleotide-gated channel involved in the establishment of both rhizobial and mycorrhizal associations. Required for full activation of nuclear-localized Ca(2+) oscillations by Nod and Myc factors. Simultaneous activation of the K(+)-permeable channel DMI1 and the Ca(2+) channel CNGC15 can give rise to sustained Ca(2+) oscillations. May function during fertilization in both female and male gametophytic Ca(2+) signaling. In Medicago truncatula (Barrel medic), this protein is Protein CNGC15a.